We begin with the raw amino-acid sequence, 273 residues long: Suppressor protein STM1 (273 aa).

The interval 1 to 153 (MSNPFDLLGN…PKTAQLSLQD (153 aa)) is disordered. Serine 2 is subject to N-acetylserine. Residues serine 32, serine 41, and serine 45 each carry the phosphoserine; by MTOR modification. Lysine 46 participates in a covalent cross-link: Glycyl lysine isopeptide (Lys-Gly) (interchain with G-Cter in ubiquitin). Serine 55 and serine 73 each carry phosphoserine; by MTOR. Serine 55 is subject to Phosphoserine. Composition is skewed to basic and acidic residues over residues 60–77 (AIRD…KDVT), 89–104 (RATD…DTKK), and 111–124 (GDDK…KEAQ). The residue at position 118 (serine 118) is a Phosphoserine. Residues lysine 121 and lysine 171 each participate in a glycyl lysine isopeptide (Lys-Gly) (interchain with G-Cter in ubiquitin) cross-link. Residue threonine 181 is modified to Phosphothreonine; by MTOR. Lysine 184 participates in a covalent cross-link: Glycyl lysine isopeptide (Lys-Gly) (interchain with G-Cter in ubiquitin). Threonine 218 bears the Phosphothreonine; by MTOR mark. Residues 219 to 273 (RKNFGDRNNNSRNNFNNRRGGRGARKGNNTANATNSANTVQKNRNIDVSNLPSLA) are disordered. Composition is skewed to low complexity over residues 224-236 (DRNN…FNNR) and 244-257 (KGNN…SANT). At serine 229 the chain carries Phosphoserine. Polar residues predominate over residues 258 to 273 (VQKNRNIDVSNLPSLA).

Belongs to the SERBP1-HABP4 family. Associates with mature 80S ribosomes. Binds to the head domain of the 40S ribosomal subunit and prevents mRNA binding by inserting its alpha-helix domain towards the mRNA entry tunnel at the decoding site, where it blocks the binding of tRNA and mRNA at the A- and P-sites. Interacts with EFT1; interaction sequesters EFT1 at the A-site of the ribosome, thereby blocking the interaction sites of the mRNA-tRNA complex, promoting ribosome stabilization and hibernation. Interacts with CDC13. Associates with the telomere-proximal Y' element. Phosphorylation by TORC1 upon nutrient replenishment inhibits STM1 and causes its release from dormant ribosomes.

The protein localises to the cytoplasm. It localises to the nucleus. The protein resides in the perinuclear region. Its function is as follows. Ribosome preservation factor that protect a small pool of nontranslating, vacant ribosomes in cells under nutrient starvation conditions. Under nutrient-limiting conditions, cells reduce ribosome biogenesis and degrade ribosomes via autophagy (ribophagy) or proteasomal degradation. To avoid excessive degradation during starvation, STM1 binds to and protects 80S ribosomes from proteasomal degradation. Under nutrient-sufficient conditions, TORC1 phosphorylates and inhibits STM1 to prevent formation of dormant 80S ribosomes. Acts as an inhibitor of mRNA translation by promoting ribosome hibernation: clamps the two ribosomal subunits, thereby preventing their dissociation, and inhibits translation by excluding mRNA-binding. Acts via its association with eEF2 (EFT1), promoting ribosome stabilization and storage in an inactive state. May also repress translation by preventing association of eEF3 (YEF3 and HEF3) with ribosomes. Binds specifically G4 quadruplex (these are four-stranded right-handed helices, stabilized by guanine base quartets) and purine motif triplex (characterized by a third, antiparallel purine-rich DNA strand located within the major groove of a homopurine stretch of duplex DNA) nucleic acid structures. These structures may be present at telomeres or in rRNAs. Acts with CDC13 to control telomere length homeostasis. Involved in the control of the apoptosis-like cell death. This Saccharomyces cerevisiae (strain ATCC 204508 / S288c) (Baker's yeast) protein is Suppressor protein STM1.